The primary structure comprises 1640 residues: Phospholipase D C (1640 aa).

The segment covering 122-132 has biased composition (polar residues); that stretch reads SHRSNQSFNHS. Disordered stretches follow at residues 122-247, 264-283, 439-499, and 521-541; these read SHRS…KRLS, HNQN…HTTT, EKQQ…YKYN, and DDEY…PSQE. Over residues 133–193 the composition is skewed to low complexity; that stretch reads NSTTPLNTTN…YSSDNSYLHN (61 aa). The segment covering 197–231 has biased composition (acidic residues); it reads DIYEDEDDEDDEDDDDDEDEDDEGKEFEQDDEDES. The span at 232–247 shows a compositional bias: polar residues; it reads TISSMSLKNSQAKRLS. Composition is skewed to low complexity over residues 264–273 and 467–499; these read HNQNHQNHQN and TTTT…YKYN. Over residues 521 to 534 the composition is skewed to acidic residues; it reads DDEYYYGEYDDEDD. One can recognise a PLD phosphodiesterase 1 domain in the interval 1009–1036; sequence LYWSHHQKVVVVDQRIAFIGGLDLCFGR. Catalysis depends on residues His-1014, Lys-1016, and Asp-1021. Composition is skewed to low complexity over residues 1149–1274 and 1282–1296; these read INNN…NNLN and HNNS…QQQQ. A disordered region spans residues 1149-1315; that stretch reads INNNNNNANN…YQPPLPPQQR (167 aa). Residues 1297-1306 show a composition bias toward basic residues; it reads QHHHHHHHHY. The region spanning 1460-1487 is the PLD phosphodiesterase 2 domain; the sequence is EQIYVHSKVLIVDDKIAIIGSANINDRS. Residues His-1465, Lys-1467, and Asp-1472 contribute to the active site.

Belongs to the phospholipase D family.

It catalyses the reaction a 1,2-diacyl-sn-glycero-3-phosphocholine + H2O = a 1,2-diacyl-sn-glycero-3-phosphate + choline + H(+). Its activity is regulated as follows. Inhibited by butan-1-ol. Its function is as follows. Plays a role in cell growth. Hydrolyzes membrane phospholipids, such as PtdCho (phosphatidylcholine), producing the free headgroup and PtdOH (phosphatidic acid; signaling molecule on its own). Involved in the inhibition of actin-based motility and endocytosis. Its inhibition causes complete collapse of F-actin organization. The chain is Phospholipase D C (pldC) from Dictyostelium discoideum (Social amoeba).